Reading from the N-terminus, the 316-residue chain is MARRRKGRPVNGVILIDKPTGITSNDTLQKVKRIYFAEKAGHTGALDPLATGMLPICLGEATKFSQFLLDSDKRYRVVAKLGERTNTSDSDGEVVQTREVKVDRGQLERCIAKFRGTTDQIPSMFSALKYQGRPLYEYAREGIEVPRESRKITVYSIELLRFEGHEVEMEVHCSKALTFVRLPTILGEMLGCGAHVTYLRRTGVSNYPYENMVTIEDLEALLEQAHREERAPRELLDPLLMPMDSAVQDLPEVNMIPELADHVLHGQPVQVFGAPQDGIVRMTSGDERLFIGVGHIDDDGRVAPKRLVVFRDEEEK.

Asp47 acts as the Nucleophile in catalysis.

It belongs to the pseudouridine synthase TruB family. Type 1 subfamily.

It catalyses the reaction uridine(55) in tRNA = pseudouridine(55) in tRNA. Responsible for synthesis of pseudouridine from uracil-55 in the psi GC loop of transfer RNAs. The sequence is that of tRNA pseudouridine synthase B from Aliivibrio fischeri (strain ATCC 700601 / ES114) (Vibrio fischeri).